Reading from the N-terminus, the 951-residue chain is Autophagy-related protein 9 (951 aa).

The segment at 1–165 (MMTSNILSRF…APGPSSRADR (165 aa)) is disordered. The Cytoplasmic segment spans residues 1–239 (MMTSNILSRF…NGIWSILLNR (239 aa)). Over residues 16-33 (SPSVYETLRQQDAESNPS) the composition is skewed to polar residues. Positions 35–54 (VEERAGLEFEDDRRTQFSDR) are enriched in basic and acidic residues. A compositionally biased stretch (polar residues) spans 79–94 (FLTQRSPQRTSGTATA). The span at 97–108 (GGRRRKHSRPRW) shows a compositional bias: basic residues. Residues 240–260 (GLSLLTFAFVVGFSTFLTNCI) traverse the membrane as a helical segment. Over 261–288 (DYRNFRGSRKMDDILIQQCTKKMSMSST) the chain is Lumenal. Residues 289 to 309 (FLLWLLTVFWIGKAFQYLMDI) form a helical membrane-spanning segment. Residues 310-455 (RRLKHMHDFY…KALSEGLRRR (146 aa)) are Cytoplasmic-facing. The stretch at 456–476 (FIFAGIMNIFVAPFIVVYFLM) is an intramembrane region. Topologically, residues 477 to 542 (HYFFRYFNEY…QFPKDKTVQV (66 aa)) are cytoplasmic. The chain crosses the membrane as a helical span at residues 543–563 (AGFVAFVSGALASVLALVSII). The Lumenal segment spans residues 564-577 (DPELFLGFEITHDR). The chain crosses the membrane as a helical span at residues 578–598 (TVLFYLGVFGSVWAFARGLVP). Topologically, residues 599 to 644 (EETNVFDPEFALLEVIDFTHYFPNHWKGRLHSDEVRKEFAVLYQMK) are cytoplasmic. An intramembrane segment occupies 645–665 (IVIFLEEILSMIFTPFILWFS). The Cytoplasmic portion of the chain corresponds to 666–951 (LPKCSDRLID…DNRGRTTVGI (286 aa)). The disordered stretch occupies residues 848–897 (SRPVRPITDPIEDDNESPSAEIRRGAVKKSPHTTTGSSGGAIGTSDSNLG).

This sequence belongs to the ATG9 family. In terms of assembly, homotrimer; forms a homotrimer with a central pore that forms a path between the two membrane leaflets. Post-translationally, phosphorylated by atg1. Atg1 phosphorylation is required for preautophagosome elongation.

The protein resides in the preautophagosomal structure membrane. It localises to the cytoplasmic vesicle membrane. The protein localises to the golgi apparatus membrane. It is found in the endoplasmic reticulum membrane. It catalyses the reaction a 1,2-diacyl-sn-glycero-3-phosphocholine(in) = a 1,2-diacyl-sn-glycero-3-phosphocholine(out). The catalysed reaction is a 1,2-diacyl-sn-glycero-3-phospho-L-serine(in) = a 1,2-diacyl-sn-glycero-3-phospho-L-serine(out). It carries out the reaction a 1,2-diacyl-sn-glycero-3-phosphoethanolamine(in) = a 1,2-diacyl-sn-glycero-3-phosphoethanolamine(out). The enzyme catalyses a 1,2-diacyl-sn-glycero-3-phospho-(1D-myo-inositol-3-phosphate)(in) = a 1,2-diacyl-sn-glycero-3-phospho-(1D-myo-inositol-3-phosphate)(out). Functionally, phospholipid scramblase involved in autophagy and cytoplasm to vacuole transport (Cvt) vesicle formation. Cycles between the preautophagosomal structure/phagophore assembly site (PAS) and the cytoplasmic vesicle pool and supplies membrane for the growing autophagosome. Lipid scramblase activity plays a key role in preautophagosomal structure/phagophore assembly by distributing the phospholipids that arrive through atg2 from the cytoplasmic to the luminal leaflet of the bilayer, thereby driving autophagosomal membrane expansion. Required for mitophagy. Also involved in endoplasmic reticulum-specific autophagic process and is essential for the survival of cells subjected to severe ER stress. Different machineries are required for anterograde trafficking to the PAS during either the Cvt pathway or bulk autophagy and for retrograde trafficking. The protein is Autophagy-related protein 9 (atg9) of Aspergillus oryzae (strain ATCC 42149 / RIB 40) (Yellow koji mold).